Consider the following 268-residue polypeptide: 4-hydroxy-tetrahydrodipicolinate reductase (268 aa).

Residue 8 to 13 participates in NAD(+) binding; it reads GAAGRM. Residue arginine 36 coordinates NADP(+). NAD(+)-binding positions include 99-101 and 123-126; these read GTT and AANF. The Proton donor/acceptor role is filled by histidine 156. Histidine 157 lines the (S)-2,3,4,5-tetrahydrodipicolinate pocket. Lysine 160 serves as the catalytic Proton donor. (S)-2,3,4,5-tetrahydrodipicolinate is bound at residue 166 to 167; the sequence is GT.

The protein belongs to the DapB family.

Its subcellular location is the cytoplasm. It catalyses the reaction (S)-2,3,4,5-tetrahydrodipicolinate + NAD(+) + H2O = (2S,4S)-4-hydroxy-2,3,4,5-tetrahydrodipicolinate + NADH + H(+). It carries out the reaction (S)-2,3,4,5-tetrahydrodipicolinate + NADP(+) + H2O = (2S,4S)-4-hydroxy-2,3,4,5-tetrahydrodipicolinate + NADPH + H(+). It functions in the pathway amino-acid biosynthesis; L-lysine biosynthesis via DAP pathway; (S)-tetrahydrodipicolinate from L-aspartate: step 4/4. In terms of biological role, catalyzes the conversion of 4-hydroxy-tetrahydrodipicolinate (HTPA) to tetrahydrodipicolinate. The protein is 4-hydroxy-tetrahydrodipicolinate reductase of Pseudomonas fluorescens (strain SBW25).